A 237-amino-acid chain; its full sequence is Ribosomal RNA small subunit methyltransferase G (237 aa).

Residues Gly-78, Phe-83, Ala-129–Glu-130, and Arg-148 contribute to the S-adenosyl-L-methionine site.

The protein belongs to the methyltransferase superfamily. RNA methyltransferase RsmG family.

It localises to the cytoplasm. Functionally, specifically methylates the N7 position of a guanine in 16S rRNA. The polypeptide is Ribosomal RNA small subunit methyltransferase G (Streptococcus pyogenes serotype M2 (strain MGAS10270)).